A 326-amino-acid polypeptide reads, in one-letter code: Ribosomal large subunit pseudouridine synthase D (326 aa).

The S4 RNA-binding domain maps to 18–91 (QRLDQALAEM…IPLDIVYEDE (74 aa)). D139 is a catalytic residue.

Belongs to the pseudouridine synthase RluA family. In terms of assembly, in late stage pre-50S ribosomal subunit interacts with ObgE and DarP(YjgA).

It localises to the cytoplasm. The catalysed reaction is uridine(1911/1915/1917) in 23S rRNA = pseudouridine(1911/1915/1917) in 23S rRNA. Functionally, responsible for synthesis of pseudouridine from uracil at positions 1911, 1915 and 1917 in 23S ribosomal RNA. Other positions are not modified. Uridine isomerization occurs as a late step during the assembly of the large ribosomal subunit. Member of a network of 50S ribosomal subunit biogenesis factors (ObgE, RluD, RsfS and DarP(YjgA)) which assembles along the 30S-50S interface, allowing 23S rRNA modification and preventing incorrect 23S rRNA structures from forming. In Escherichia coli (strain K12), this protein is Ribosomal large subunit pseudouridine synthase D.